We begin with the raw amino-acid sequence, 183 residues long: DNA-directed RNA polymerase subunit Rpo7 (183 aa).

Positions 82-164 (HEVIEGEVSQ…RLPRIALTMK (83 aa)) constitute an S1 motif domain.

This sequence belongs to the eukaryotic RPB7/RPC8 RNA polymerase subunit family. In terms of assembly, part of the 13-subunit RNA polymerase complex. Forms a stalk with Rpo4 that extends from the main structure.

The protein localises to the cytoplasm. The enzyme catalyses RNA(n) + a ribonucleoside 5'-triphosphate = RNA(n+1) + diphosphate. DNA-dependent RNA polymerase (RNAP) catalyzes the transcription of DNA into RNA using the four ribonucleoside triphosphates as substrates. Its function is as follows. Reconstitution experiments show this subunit is required for basic activity. This Sulfolobus acidocaldarius (strain ATCC 33909 / DSM 639 / JCM 8929 / NBRC 15157 / NCIMB 11770) protein is DNA-directed RNA polymerase subunit Rpo7.